The primary structure comprises 308 residues: Uricase (308 aa).

Catalysis depends on charge relay system residues lysine 5 and threonine 65. 7 residues coordinate urate: threonine 65, aspartate 66, phenylalanine 177, arginine 194, isoleucine 242, glutamine 243, and asparagine 269. Residues 283 to 308 (ASVLREPPAPTGFQQFSMDRGDLDEQ) form a disordered region.

It belongs to the uricase family.

The catalysed reaction is urate + O2 + H2O = 5-hydroxyisourate + H2O2. It participates in purine metabolism; urate degradation; (S)-allantoin from urate: step 1/3. Its function is as follows. Catalyzes the oxidation of uric acid to 5-hydroxyisourate, which is further processed to form (S)-allantoin. This Haloferax volcanii (strain ATCC 29605 / DSM 3757 / JCM 8879 / NBRC 14742 / NCIMB 2012 / VKM B-1768 / DS2) (Halobacterium volcanii) protein is Uricase.